A 340-amino-acid chain; its full sequence is Branched-chain-amino-acid aminotransferase (340 aa).

Residue Lys-187 is modified to N6-(pyridoxal phosphate)lysine.

It belongs to the class-IV pyridoxal-phosphate-dependent aminotransferase family. Pyridoxal 5'-phosphate serves as cofactor.

The catalysed reaction is L-leucine + 2-oxoglutarate = 4-methyl-2-oxopentanoate + L-glutamate. It catalyses the reaction L-isoleucine + 2-oxoglutarate = (S)-3-methyl-2-oxopentanoate + L-glutamate. The enzyme catalyses L-valine + 2-oxoglutarate = 3-methyl-2-oxobutanoate + L-glutamate. It functions in the pathway amino-acid biosynthesis; L-isoleucine biosynthesis; L-isoleucine from 2-oxobutanoate: step 4/4. The protein operates within amino-acid biosynthesis; L-leucine biosynthesis; L-leucine from 3-methyl-2-oxobutanoate: step 4/4. It participates in amino-acid biosynthesis; L-valine biosynthesis; L-valine from pyruvate: step 4/4. Acts on leucine, isoleucine and valine. The chain is Branched-chain-amino-acid aminotransferase (ilvE) from Helicobacter pylori (strain J99 / ATCC 700824) (Campylobacter pylori J99).